We begin with the raw amino-acid sequence, 175 residues long: MFNFINNIQNYSKEAVQAAQYIGQGFMVTFDHMSRRPVTIQYPYEKLIPSERFRGRIHFEFDKCIACEVCVRVCPINLPVVNWEFQKEKKKKQLQTYSIDFGVCIFCGNCVEYCPTNCLSMTEEYELSVYDRHELNFDNFALGRLPSMVENDAMVKNMKGLGYLPKGVIESHASS.

4Fe-4S ferredoxin-type domains are found at residues 55 to 84 (GRIHFEFDKCIACEVCVRVCPINLPVVNWE) and 95 to 124 (QTYSIDFGVCIFCGNCVEYCPTNCLSMTEE). Residues cysteine 64, cysteine 67, cysteine 70, cysteine 74, cysteine 104, cysteine 107, cysteine 110, and cysteine 114 each contribute to the [4Fe-4S] cluster site.

It belongs to the complex I 23 kDa subunit family. NDH is composed of at least 16 different subunits, 5 of which are encoded in the nucleus. The cofactor is [4Fe-4S] cluster.

It is found in the plastid. It localises to the chloroplast thylakoid membrane. It carries out the reaction a plastoquinone + NADH + (n+1) H(+)(in) = a plastoquinol + NAD(+) + n H(+)(out). It catalyses the reaction a plastoquinone + NADPH + (n+1) H(+)(in) = a plastoquinol + NADP(+) + n H(+)(out). NDH shuttles electrons from NAD(P)H:plastoquinone, via FMN and iron-sulfur (Fe-S) centers, to quinones in the photosynthetic chain and possibly in a chloroplast respiratory chain. The immediate electron acceptor for the enzyme in this species is believed to be plastoquinone. Couples the redox reaction to proton translocation, and thus conserves the redox energy in a proton gradient. The sequence is that of NAD(P)H-quinone oxidoreductase subunit I, chloroplastic from Chlorokybus atmophyticus (Soil alga).